We begin with the raw amino-acid sequence, 118 residues long: T cell receptor gamma variable 2 (118 aa).

Residues 1–17 (MQWALAVLLAFLSPASQ) form the signal peptide. Residues 18-118 (KSSNLEGRTK…GVYYCATWDG (101 aa)) form the Ig-like domain. A disulfide bridge connects residues Cys41 and Cys113.

As to quaternary structure, gamma-delta TR is a heterodimer composed of a gamma and delta chain; disulfide-linked. The gamma-delta TR is associated with the transmembrane signaling CD3 coreceptor proteins following the stoichiometry: a single gamma-delta TR heterodimer associates with one CD3D-CD3E heterodimer, one CD3G-CD3E heterodimer and one CD247 homodimer forming a stable octameric structure. Upon activation, gamma-delta TR complex associates with FCER1G to initiate intracellular signaling.

It is found in the cell membrane. In terms of biological role, v region of the variable domain of T cell receptor (TR) gamma chain that participates in the antigen recognition. Gamma-delta TRs recognize a variety of self and foreign non-peptide antigens frequently expressed at the epithelial boundaries between the host and external environment, including endogenous lipids presented by MH-like protein CD1D and phosphoantigens presented by butyrophilin-like molecule BTN3A1. Upon antigen recognition induces rapid, innate-like immune responses involved in pathogen clearance and tissue repair. Binding of gamma-delta TR complex to antigen triggers phosphorylation of immunoreceptor tyrosine-based activation motifs (ITAMs) in the CD3 chains by the LCK and FYN kinases, allowing the recruitment, phosphorylation, and activation of ZAP70 that facilitates phosphorylation of the scaffolding proteins LCP2 and LAT. This lead to the formation of a supramolecular signalosome that recruits the phospholipase PLCG1, resulting in calcium mobilization and ERK activation, ultimately leading to T cell expansion and differentiation into effector cells. Gamma-delta TRs are produced through somatic rearrangement of a limited repertoire of variable (V), diversity (D), and joining (J) genes. The potential diversity of gamma-delta TRs is conferred by the unique ability to rearrange (D) genes in tandem and to utilize all three reading frames. The combinatorial diversity is considerably increased by the sequence exonuclease trimming and random nucleotide (N) region additions which occur during the V-(D)-J rearrangements. The protein is T cell receptor gamma variable 2 of Homo sapiens (Human).